We begin with the raw amino-acid sequence, 653 residues long: MAEAPQVVEIDPDFEPLPRPRSCTWPLPRPEFSQSNSATSSPAPSGGATANPDASAGLPPASAAAVSADFMSNLSLLEESEDFPQAPGSVAAAVAAAAAAATGGLCGDFQGLEAGCLHPAPPQPPPPGPLSQHPPVPPAAGPLAGQPRKSSSSRRNAWGNLSYADLITKAIESSAEKRLTLSQIYEWMVKSVPYFKDKGDSNSSAGWKNSIRHNLSLHSKFIRVQNEGTGKSSWWMLNPEGGKSGKSPRRRAASMDNNSKFAKSRGQAAKKKASLQSGQEGAGDSPGSQFSKWPASPGSHSNDDFDNWSTFRPRTSSNASTISGRFSPIMTEQDDLGDGDVHSLVYPPSASKMASTLPSLSEISNPENMENLLDNLNLLSSPTSLTVSTQSSPGSMMQQTPCYSFAPPSTSLNSPSPNYQKYTYGQSSMSPLSQMPMQTLQDNKSSYGGLNQFNCAQGLLKELLTSDSPPHNDIMSSVDPGVAQPNSRVLGQNVMLGPNSVMPAYGNQASHNKMMNPSSHTHPGHAQQTSVVNGRALPHTVNTMPHTSGMNRLTPVKTPLQVPLLHHMQMSALGGYSSVSSCSGYGRMGVLHQEKLPSDLDGMFIERLDCDMESIIRNDLMDGDALDFNFDNVLPNQSFPHGVKTTTHSWVSG.

Disordered stretches follow at residues 1–64 (MAEA…ASAA) and 117–156 (LHPA…SRRN). Thr24 is modified (phosphothreonine; by PKB/AKT1 or PKB/AKT2 and SGK1). Residues 35 to 64 (SNSATSSPAPSGGATANPDASAGLPPASAA) show a composition bias toward low complexity. Residues 119–140 (PAPPQPPPPGPLSQHPPVPPAA) show a composition bias toward pro residues. The segment at residues 157–233 (AWGNLSYADL…VQNEGTGKSS (77 aa)) is a DNA-binding region (fork-head). DNA-binding stretches follow at residues 209-216 (NSIRHNLS) and 232-235 (SSWW). Ser210 carries the phosphoserine; by STK4/MST1 modification. Phosphoserine occurs at positions 216, 232, and 233. Residues 232-335 (SSWWMLNPEG…FSPIMTEQDD (104 aa)) are disordered. 2 positions are modified to N6-acetyllysine: Lys243 and Lys246. The residue at position 247 (Ser247) is a Phosphoserine; by CDK1. An omega-N-methylarginine; by PRMT1 mark is found at Arg249 and Arg251. The Nuclear localization signal motif lies at 249-251 (RRR). Ser254 is subject to Phosphoserine; by PKB/AKT1 and SGK1. Residues Lys260, Lys263, and Lys272 each carry the N6-acetyllysine modification. A sufficient for interaction with NLK region spans residues 281–561 (GAGDSPGSQF…RLTPVKTPLQ (281 aa)). A phosphoserine mark is found at Ser285 and Ser296. A compositionally biased stretch (polar residues) spans 307 to 324 (NWSTFRPRTSSNASTISG). Residue Ser317 is modified to Phosphoserine; by PKB/AKT1 or PKB/AKT2. Position 320 is a phosphoserine; by CK1 and SGK1 (Ser320). Ser323 bears the Phosphoserine mark. A Phosphoserine; by DYRK1A modification is found at Ser327. Residue Thr331 is modified to Phosphothreonine. Residues 361-457 (SEISNPENME…GGLNQFNCAQ (97 aa)) form a required for interaction with RUNX2 region. N6-acetyllysine is present on Lys421. Residues 460-464 (LKELL) carry the Required for interaction with SIRT1 motif.

Interacts with LRPPRC. Interacts with RUNX2; the interaction inhibits RUNX2 transcriptional activity and mediates the IGF1/insulin-dependent BGLAP expression in osteoblasts Interacts with PPP2R1A; the interaction regulates the dephosphorylation of FOXO1 at Thr-24 and Ser-254 leading to its nuclear import. Interacts with NLK. Interacts with SIRT1; the interaction results in the deacetylation of FOXO1 leading to activation of FOXO1-mediated transcription of genes involved in DNA repair and stress resistance. Binds to CDK1. Interacts with the 14-3-3 proteins, YWHAG and YWHAZ; the interactions require insulin-stimulated phosphorylation on Thr-24, promote nuclear exit and loss of transcriptional activity. Interacts with SKP2; the interaction ubiquitinates FOXO1 leading to its proteasomal degradation. The interaction requires the presence of KRIT1. Interacts (via the C-terminal half) with ATF4 (via its DNA-binding domain); the interaction occurs in osteoblasts, regulates glucose homeostasis via suppression of beta-cell proliferation and subsequent decrease in insulin production. Interacts with PRMT1; the interaction methylates FOXO1, prevents PKB/AKT1 phosphorylation and retains FOXO1 in the nucleus. Interacts with EP300 and CREBBP; the interactions acetylate FOXO1. Interacts with SIRT2; the interaction is disrupted in response to oxidative stress or serum deprivation, leading to increased level of acetylated FOXO1, which promotes stress-induced autophagy by stimulating E1-like activating enzyme ATG7. Interacts (acetylated form) with ATG7; the interaction is increased in response to oxidative stress or serum deprivation and promotes the autophagic process leading to cell death. Interacts (acetylated form) with PPARG. Interacts with XBP1; this interaction is direct and leads to FOXO1 ubiquitination and degradation via the proteasome pathway. Interacts with WDFY2. Forms a complex with WDFY2 and AKT1. Interacts with CRY1. Interacts with PPIA/CYPA; the interaction promotes FOXO1 dephosphorylation, nuclear accumulation and transcriptional activity. Interacts with TOX4; FOXO1 is required for full induction of TOX4-dependent activity and the interaction is inhibited by insulin. Interacts (when phosphorylated on Ser-254) with STUB1/CHIP. In terms of processing, phosphorylation by NLK promotes nuclear export and inhibits the transcriptional activity. In response to growth factors, phosphorylation on Thr-24, Ser-254 and Ser-320 by PKB/AKT1 promotes nuclear export and inactivation of transactivational activity. Phosphorylation on Thr-24 is required for binding 14-3-3 proteins. Phosphorylation of Ser-254 decreases DNA-binding activity and promotes the phosphorylation of Thr-24 and Ser-317, permitting phosphorylation of Ser-320 and Ser-323, probably by CDK1, leading to nuclear exclusion and loss of function. Stress signals, such as response to oxygen or nitric oxide, attenuate the PKB/AKT1-mediated phosphorylation leading to nuclear retention. Phosphorylation of Ser-327 is independent of IGF1 and leads to reduced function. Dephosphorylated on Thr-24 and Ser-254 by PP2A in beta-cells under oxidative stress leading to nuclear retention. Phosphorylation of Ser-247 by CDK1 disrupts binding of 14-3-3 proteins leading to nuclear accumulation and has no effect on DNA binding nor transcriptional activity. Phosphorylation by STK4/MST1 on Ser-210, upon oxidative stress, inhibits binding to 14-3-3 proteins and nuclear export. PPIA/CYPA promotes its dephosphorylation on Ser-254. Ubiquitinated by SKP2. Ubiquitination leads to proteasomal degradation. Ubiquitinated by STUB1/CHIP; when Ser-254 is phosphorylated. Post-translationally, methylation inhibits AKT1-mediated phosphorylation at Ser-254 and is increased by oxidative stress. In terms of processing, acetylated. Acetylation at Lys-260 and Lys-272 are necessary for autophagic cell death induction. Deacetylated by SIRT2 in response to oxidative stress or serum deprivation, thereby negatively regulating FOXO1-mediated autophagic cell death. Once in the nucleus, acetylated by CREBBP/EP300. Acetylation diminishes the interaction with target DNA and attenuates the transcriptional activity. It increases the phosphorylation at Ser-254. Deacetylation by SIRT1 results in reactivation of the transcriptional activity. Oxidative stress by hydrogen peroxide treatment appears to promote deacetylation and uncoupling of insulin-induced phosphorylation. By contrast, resveratrol acts independently of acetylation. Acetylated at Lys-421, promoting its localization to the nucleus and transcription factor activity. Deacetylation at Lys-421 by SIRT6, promotes its translocation into the cytoplasm, preventing its transcription factor activity. Deacetylation and subsequent inhibition by SIRT6 has different effects depending on cell types: it inhibits gluconeogenesis in hepatocytes, promotes glucose sensing in pancreatic beta-cells and regulates lipid catabolism in brown adipocytes.

Its subcellular location is the cytoplasm. It localises to the nucleus. Its function is as follows. Transcription factor that is the main target of insulin signaling and regulates metabolic homeostasis in response to oxidative stress. Binds to the insulin response element (IRE) with consensus sequence 5'-TT[G/A]TTTTG-3' and the related Daf-16 family binding element (DBE) with consensus sequence 5'-TT[G/A]TTTAC-3'. Activity suppressed by insulin. Main regulator of redox balance and osteoblast numbers and controls bone mass. Orchestrates the endocrine function of the skeleton in regulating glucose metabolism. Also acts as a key regulator of chondrogenic commitment of skeletal progenitor cells in response to lipid availability: when lipids levels are low, translocates to the nucleus and promotes expression of SOX9, which induces chondrogenic commitment and suppresses fatty acid oxidation. Acts synergistically with ATF4 to suppress osteocalcin/BGLAP activity, increasing glucose levels and triggering glucose intolerance and insulin insensitivity. Also suppresses the transcriptional activity of RUNX2, an upstream activator of osteocalcin/BGLAP. Acts as an inhibitor of glucose sensing in pancreatic beta cells by acting as a transcription repressor and suppressing expression of PDX1. In hepatocytes, promotes gluconeogenesis by acting together with PPARGC1A and CEBPA to activate the expression of genes such as IGFBP1, G6PC1 and PCK1. Also promotes gluconeogenesis by directly promoting expression of PPARGC1A and G6PC1. Important regulator of cell death acting downstream of CDK1, PKB/AKT1 and STK4/MST1. Promotes neural cell death. Mediates insulin action on adipose tissue. Regulates the expression of adipogenic genes such as PPARG during preadipocyte differentiation and, adipocyte size and adipose tissue-specific gene expression in response to excessive calorie intake. Regulates the transcriptional activity of GADD45A and repair of nitric oxide-damaged DNA in beta-cells. Required for the autophagic cell death induction in response to starvation or oxidative stress in a transcription-independent manner. Mediates the function of MLIP in cardiomyocytes hypertrophy and cardiac remodeling. Positive regulator of apoptosis in cardiac smooth muscle cells as a result of its transcriptional activation of pro-apoptotic genes. Regulates endothelial cell (EC) viability and apoptosis in a PPIA/CYPA-dependent manner via transcription of CCL2 and BCL2L11 which are involved in EC chemotaxis and apoptosis. The chain is Forkhead box protein O1 (FOXO1) from Ictidomys tridecemlineatus (Thirteen-lined ground squirrel).